The following is a 325-amino-acid chain: Phenylalanine--tRNA ligase alpha subunit (325 aa).

Residue E251 participates in Mg(2+) binding.

Belongs to the class-II aminoacyl-tRNA synthetase family. Phe-tRNA synthetase alpha subunit type 1 subfamily. As to quaternary structure, tetramer of two alpha and two beta subunits. Mg(2+) serves as cofactor.

It is found in the cytoplasm. It catalyses the reaction tRNA(Phe) + L-phenylalanine + ATP = L-phenylalanyl-tRNA(Phe) + AMP + diphosphate + H(+). The protein is Phenylalanine--tRNA ligase alpha subunit (pheS) of Thermotoga maritima (strain ATCC 43589 / DSM 3109 / JCM 10099 / NBRC 100826 / MSB8).